A 329-amino-acid polypeptide reads, in one-letter code: Ketol-acid reductoisomerase (NADP(+)) (329 aa).

A KARI N-terminal Rossmann domain is found at 2 to 182; that stretch reads ARMYYEKDVD…GATRAGVLET (181 aa). Residues 25 to 28, serine 51, serine 53, and 83 to 86 each bind NADP(+); these read YGSQ and DEKQ. Histidine 108 is a catalytic residue. Residue glycine 134 participates in NADP(+) binding. The KARI C-terminal knotted domain maps to 183–328; the sequence is TFKEETETDL…RNLRSMMSFL (146 aa). 4 residues coordinate Mg(2+): aspartate 191, glutamate 195, glutamate 227, and glutamate 231. Serine 252 contacts substrate.

It belongs to the ketol-acid reductoisomerase family. It depends on Mg(2+) as a cofactor.

It carries out the reaction (2R)-2,3-dihydroxy-3-methylbutanoate + NADP(+) = (2S)-2-acetolactate + NADPH + H(+). The enzyme catalyses (2R,3R)-2,3-dihydroxy-3-methylpentanoate + NADP(+) = (S)-2-ethyl-2-hydroxy-3-oxobutanoate + NADPH + H(+). It functions in the pathway amino-acid biosynthesis; L-isoleucine biosynthesis; L-isoleucine from 2-oxobutanoate: step 2/4. It participates in amino-acid biosynthesis; L-valine biosynthesis; L-valine from pyruvate: step 2/4. Functionally, involved in the biosynthesis of branched-chain amino acids (BCAA). Catalyzes an alkyl-migration followed by a ketol-acid reduction of (S)-2-acetolactate (S2AL) to yield (R)-2,3-dihydroxy-isovalerate. In the isomerase reaction, S2AL is rearranged via a Mg-dependent methyl migration to produce 3-hydroxy-3-methyl-2-ketobutyrate (HMKB). In the reductase reaction, this 2-ketoacid undergoes a metal-dependent reduction by NADPH to yield (R)-2,3-dihydroxy-isovalerate. This chain is Ketol-acid reductoisomerase (NADP(+)), found in Clostridioides difficile (strain 630) (Peptoclostridium difficile).